Consider the following 164-residue polypeptide: SsrA-binding protein (164 aa).

Positions 141-164 (KLHDKRQDEKQKSIKKEINSALKR) are disordered. The span at 145–158 (KRQDEKQKSIKKEI) shows a compositional bias: basic and acidic residues.

This sequence belongs to the SmpB family.

It localises to the cytoplasm. Functionally, required for rescue of stalled ribosomes mediated by trans-translation. Binds to transfer-messenger RNA (tmRNA), required for stable association of tmRNA with ribosomes. tmRNA and SmpB together mimic tRNA shape, replacing the anticodon stem-loop with SmpB. tmRNA is encoded by the ssrA gene; the 2 termini fold to resemble tRNA(Ala) and it encodes a 'tag peptide', a short internal open reading frame. During trans-translation Ala-aminoacylated tmRNA acts like a tRNA, entering the A-site of stalled ribosomes, displacing the stalled mRNA. The ribosome then switches to translate the ORF on the tmRNA; the nascent peptide is terminated with the 'tag peptide' encoded by the tmRNA and targeted for degradation. The ribosome is freed to recommence translation, which seems to be the essential function of trans-translation. The sequence is that of SsrA-binding protein from Prochlorococcus marinus (strain AS9601).